Reading from the N-terminus, the 657-residue chain is Pyoverdine export ATP-binding/permease protein PvdT (657 aa).

Positions 6 to 245 (IDLQDIRKSY…ASTNPGALQA (240 aa)) constitute an ABC transporter domain. 43 to 50 (GASGSGKS) contributes to the ATP binding site. 4 consecutive transmembrane segments (helical) span residues 285–305 (ALTL…LAVG), 539–559 (IAAI…LMTV), 590–610 (LSVV…GVLI), and 620–640 (LVAI…FGFM).

The protein belongs to the ABC transporter superfamily. Macrolide exporter (TC 3.A.1.122) family. Part of the tripartite efflux system PvdRT-OpmQ, which is composed of an inner membrane component with both ATPase and permease domains, PvdT, a periplasmic membrane fusion protein, PvdR, and an outer membrane component, OpmQ.

Its subcellular location is the cell inner membrane. Functionally, part of the tripartite efflux system PvdRT-OpmQ required for the secretion into the extracellular milieu of the siderophore pyoverdine (PVD), which is involved in iron acquisition. This subunit binds PVD and drives its secretion by hydrolyzing ATP. The system is responsible for export of newly synthesized PVD after the final steps of biosynthesis have taken place in the periplasm. It is also responsible for recycling of PVD after internalization of ferri-PVD into the periplasm by the outer-membrane receptor FpvA and release of iron from PVD, thus making PVD available for new cycles of iron uptake. This Pseudomonas fluorescens (strain Pf0-1) protein is Pyoverdine export ATP-binding/permease protein PvdT.